The following is a 640-amino-acid chain: Dextranase (640 aa).

Positions 1–32 (MPGTGLGRLAKHVTAAAAVFLISTGAVLPAQA) are cleaved as a signal peptide.

This sequence belongs to the glycosyl hydrolase 49 family.

The protein resides in the secreted. The enzyme catalyses Endohydrolysis of (1-&gt;6)-alpha-D-glucosidic linkages in dextran.. This Arthrobacter globiformis protein is Dextranase.